The following is a 353-amino-acid chain: Photosystem II protein D1 (353 aa).

3 helical membrane passes run 29 to 46 (YVGW…TATI), 118 to 133 (HFLI…EWEL), and 142 to 156 (WICV…AATA). Histidine 118 serves as a coordination point for chlorophyll a. Tyrosine 126 is a binding site for pheophytin a. Aspartate 170 and glutamate 189 together coordinate [CaMn4O5] cluster. Residues 197–218 (FHMLGVAGVFGGSLFSAMHGSL) traverse the membrane as a helical segment. Histidine 198 contributes to the chlorophyll a binding site. Residues histidine 215 and 264–265 (SF) each bind a quinone. Fe cation is bound at residue histidine 215. Histidine 272 lines the Fe cation pocket. Residues 274-288 (FLAAWPVVGIWFTSL) traverse the membrane as a helical segment. [CaMn4O5] cluster is bound by residues histidine 332, glutamate 333, aspartate 342, and alanine 344. Residues 345-353 (AVKAPSIIG) constitute a propeptide that is removed on maturation.

Belongs to the reaction center PufL/M/PsbA/D family. In terms of assembly, PSII is composed of 1 copy each of membrane proteins PsbA, PsbB, PsbC, PsbD, PsbE, PsbF, PsbH, PsbI, PsbJ, PsbK, PsbL, PsbM, PsbT, PsbX, PsbY, PsbZ, Psb30/Ycf12, peripheral proteins PsbO, CyanoQ (PsbQ), PsbU, PsbV and a large number of cofactors. It forms dimeric complexes. The cofactor is The D1/D2 heterodimer binds P680, chlorophylls that are the primary electron donor of PSII, and subsequent electron acceptors. It shares a non-heme iron and each subunit binds pheophytin, quinone, additional chlorophylls, carotenoids and lipids. D1 provides most of the ligands for the Mn4-Ca-O5 cluster of the oxygen-evolving complex (OEC). There is also a Cl(-1) ion associated with D1 and D2, which is required for oxygen evolution. The PSII complex binds additional chlorophylls, carotenoids and specific lipids.. Tyr-161 forms a radical intermediate that is referred to as redox-active TyrZ, YZ or Y-Z. Post-translationally, C-terminally processed by CtpA; processing is essential to allow assembly of the oxygen-evolving complex and thus photosynthetic growth.

It localises to the cellular thylakoid membrane. The catalysed reaction is 2 a plastoquinone + 4 hnu + 2 H2O = 2 a plastoquinol + O2. Its function is as follows. Photosystem II (PSII) is a light-driven water:plastoquinone oxidoreductase that uses light energy to abstract electrons from H(2)O, generating O(2) and a proton gradient subsequently used for ATP formation. It consists of a core antenna complex that captures photons, and an electron transfer chain that converts photonic excitation into a charge separation. The D1/D2 (PsbA/PsbD) reaction center heterodimer binds P680, the primary electron donor of PSII as well as several subsequent electron acceptors. This chain is Photosystem II protein D1, found in Prochlorothrix hollandica.